We begin with the raw amino-acid sequence, 193 residues long: Protein Syd (193 aa).

The protein belongs to the Syd family.

Its subcellular location is the cell inner membrane. In terms of biological role, interacts with the SecY protein in vivo. May bind preferentially to an uncomplexed state of SecY, thus functioning either as a chelating agent for excess SecY in the cell or as a regulatory factor that negatively controls the translocase function. The protein is Protein Syd of Tolumonas auensis (strain DSM 9187 / NBRC 110442 / TA 4).